The chain runs to 591 residues: Aspartate--tRNA(Asp/Asn) ligase (591 aa).

Glu-176 contacts L-aspartate. The aspartate stretch occupies residues 200–203 (QLFK). Arg-222 serves as a coordination point for L-aspartate. ATP-binding positions include 222-224 (RDE) and Gln-231. Position 450 (His-450) interacts with L-aspartate. Glu-484 is a binding site for ATP. Arg-491 serves as a coordination point for L-aspartate. Residue 536–539 (GLDR) participates in ATP binding.

The protein belongs to the class-II aminoacyl-tRNA synthetase family. Type 1 subfamily. As to quaternary structure, homodimer.

Its subcellular location is the cytoplasm. It carries out the reaction tRNA(Asx) + L-aspartate + ATP = L-aspartyl-tRNA(Asx) + AMP + diphosphate. In terms of biological role, aspartyl-tRNA synthetase with relaxed tRNA specificity since it is able to aspartylate not only its cognate tRNA(Asp) but also tRNA(Asn). Reaction proceeds in two steps: L-aspartate is first activated by ATP to form Asp-AMP and then transferred to the acceptor end of tRNA(Asp/Asn). The polypeptide is Aspartate--tRNA(Asp/Asn) ligase (Bacillus mycoides (strain KBAB4) (Bacillus weihenstephanensis)).